The following is a 378-amino-acid chain: Enoyl-[acyl-carrier-protein] reductase 1, mitochondrial (378 aa).

The Proton donor role is filled by tyrosine 59. Residues asparagine 151, 180–183 (NSQV), 203–206 (RDGK), 284–287 (YGGM), 309–311 (YWL), and lysine 372 each bind NADP(+).

It belongs to the zinc-containing alcohol dehydrogenase family. Quinone oxidoreductase subfamily. Homodimer.

It is found in the mitochondrion matrix. It carries out the reaction a 2,3-saturated acyl-[ACP] + NADP(+) = a (2E)-enoyl-[ACP] + NADPH + H(+). Its function is as follows. Catalyzes the NADPH-dependent reduction of trans-2-enoyl thioesters in mitochondrial fatty acid synthesis (fatty acid synthesis type II). Fatty acid chain elongation in mitochondria uses acyl carrier protein (ACP) as an acyl group carrier, but the enzyme accepts both ACP and CoA thioesters as substrates in vitro. Required for respiration and the maintenance of the mitochondrial compartment. The sequence is that of Enoyl-[acyl-carrier-protein] reductase 1, mitochondrial (ETR1) from Debaryomyces hansenii (strain ATCC 36239 / CBS 767 / BCRC 21394 / JCM 1990 / NBRC 0083 / IGC 2968) (Yeast).